Here is a 1168-residue protein sequence, read N- to C-terminus: Probable pre-mRNA-splicing factor ATP-dependent RNA helicase DEAH5 (1168 aa).

Residues 76–206 (IYPPKPKSEK…KDEYVEEDKG (131 aa)) form a disordered region. Composition is skewed to basic and acidic residues over residues 81-172 (PKSE…DRRS) and 180-206 (GRGDGGEGEDRRRDRRAKDEYVEEDKG). The S1 motif domain occupies 214 to 283 (YQVYKGRVTR…SSDKYSLSMR (70 aa)). Positions 289–326 (TGRDLIPLRKPSDEDDSSRSNPSYRTKDGQVTKTGISG) are disordered. The residue at position 411 (S411) is a Phosphoserine. The Helicase ATP-binding domain occupies 525–688 (IQAVHDNQVL…FFNCNIFTIP (164 aa)). 538-545 (GETGSGKT) is a binding site for ATP. The short motif at 635 to 638 (DEAH) is the DEAH box element. Residues 706–886 (YLDAALITVL…MTTLTMKAMG (181 aa)) enclose the Helicase C-terminal domain.

Belongs to the DEAD box helicase family. DEAH subfamily. PRP22 sub-subfamily.

It is found in the nucleus. The catalysed reaction is ATP + H2O = ADP + phosphate + H(+). Its function is as follows. May be involved in pre-mRNA splicing. This chain is Probable pre-mRNA-splicing factor ATP-dependent RNA helicase DEAH5, found in Arabidopsis thaliana (Mouse-ear cress).